Consider the following 330-residue polypeptide: uncharacterized protein (330 aa).

Position 125-132 (125-132) interacts with ATP; it reads GPPGCGKT.

The protein belongs to the AAA ATPase family.

This is an uncharacterized protein from Sinorhizobium fredii (strain NBRC 101917 / NGR234).